A 526-amino-acid polypeptide reads, in one-letter code: Na(+)/H(+) antiporter NhaB (526 aa).

The next 10 helical transmembrane spans lie at 13-33 (FLGQ…VVNP), 98-118 (LLLI…LFVF), 133-155 (LAFC…VAVV), 208-228 (LLMH…VGEP), 244-264 (FFLR…LVCL), 309-329 (ALIG…VGLI), 355-375 (EALP…VIIE), 395-415 (LALF…VFVG), 452-472 (VATP…LAPL), and 481-501 (VWMA…CVQF).

Belongs to the NhaB Na(+)/H(+) (TC 2.A.34) antiporter family.

It is found in the cell inner membrane. The enzyme catalyses 2 Na(+)(in) + 3 H(+)(out) = 2 Na(+)(out) + 3 H(+)(in). In terms of biological role, na(+)/H(+) antiporter that extrudes sodium in exchange for external protons. The protein is Na(+)/H(+) antiporter NhaB of Serratia proteamaculans (strain 568).